The sequence spans 215 residues: Adenylate kinase (215 aa).

Gly10–Thr15 contacts ATP. The interval Ser30–Val59 is NMP. Residues Thr31, Arg36, Glu57–Val59, Gly85–Arg88, and Gln92 each bind AMP. Residues Gly126 to Asp162 are LID. Arg127 lines the ATP pocket. Residues Cys130 and Cys132 each coordinate Zn(2+). Ser135–Tyr136 contributes to the ATP binding site. Residues Cys149 and Cys152 each contribute to the Zn(2+) site. AMP-binding residues include Arg159 and Arg170. Lys198 contributes to the ATP binding site.

This sequence belongs to the adenylate kinase family. As to quaternary structure, monomer.

It localises to the cytoplasm. It carries out the reaction AMP + ATP = 2 ADP. It participates in purine metabolism; AMP biosynthesis via salvage pathway; AMP from ADP: step 1/1. Functionally, catalyzes the reversible transfer of the terminal phosphate group between ATP and AMP. Plays an important role in cellular energy homeostasis and in adenine nucleotide metabolism. The sequence is that of Adenylate kinase from Methanosarcina barkeri (strain Fusaro / DSM 804).